Here is a 152-residue protein sequence, read N- to C-terminus: Protein SprT-like (152 aa).

The SprT-like domain occupies 7 to 147 (QRLVEEVSLQ…CGKCKGKLKP (141 aa)). Position 67 (histidine 67) interacts with Zn(2+). The active site involves glutamate 68. Histidine 71 is a Zn(2+) binding site.

Belongs to the SprT family. Zn(2+) serves as cofactor.

Its subcellular location is the cytoplasm. The sequence is that of Protein SprT-like from Bacillus cereus (strain B4264).